The chain runs to 485 residues: Threonine synthase-like 2 (485 aa).

Lys113 bears the N6-(pyridoxal phosphate)lysine mark.

This sequence belongs to the threonine synthase family. Pyridoxal 5'-phosphate is required as a cofactor.

Acts as a catabolic phospho-lyase on both gamma- and beta-phosphorylated substrates. Degrades O-phospho-threonine (PThr) to alpha-ketobutyrate, ammonia and phosphate. This is Threonine synthase-like 2 (Thnsl2) from Rattus norvegicus (Rat).